A 509-amino-acid chain; its full sequence is uncharacterized protein (509 aa).

The N-terminal stretch at 1–32 (MMLPKRNIIHFLRKRAIFIVAAFIALLTVDYS) is a signal peptide.

The protein localises to the endoplasmic reticulum. This is an uncharacterized protein from Schizosaccharomyces pombe (strain 972 / ATCC 24843) (Fission yeast).